A 240-amino-acid polypeptide reads, in one-letter code: LexA repressor (240 aa).

The segment at residues 26 to 46 (FDEMKEALDLASKSGIHRLIT) is a DNA-binding region (H-T-H motif). Active-site for autocatalytic cleavage activity residues include Ser-161 and Lys-199.

Belongs to the peptidase S24 family. Homodimer.

The catalysed reaction is Hydrolysis of Ala-|-Gly bond in repressor LexA.. In terms of biological role, represses a number of genes involved in the response to DNA damage (SOS response), including recA and lexA. In the presence of single-stranded DNA, RecA interacts with LexA causing an autocatalytic cleavage which disrupts the DNA-binding part of LexA, leading to derepression of the SOS regulon and eventually DNA repair. The protein is LexA repressor of Brucella ovis (strain ATCC 25840 / 63/290 / NCTC 10512).